Reading from the N-terminus, the 487-residue chain is Protein nucleotidyltransferase YdiU (487 aa).

ATP-binding residues include glycine 91, glycine 93, arginine 94, lysine 114, aspartate 126, glycine 127, arginine 177, and arginine 184. Residue aspartate 253 is the Proton acceptor of the active site. Asparagine 254 and aspartate 263 together coordinate Mg(2+). Aspartate 263 serves as a coordination point for ATP.

This sequence belongs to the SELO family. It depends on Mg(2+) as a cofactor. Requires Mn(2+) as cofactor.

It carries out the reaction L-seryl-[protein] + ATP = 3-O-(5'-adenylyl)-L-seryl-[protein] + diphosphate. The catalysed reaction is L-threonyl-[protein] + ATP = 3-O-(5'-adenylyl)-L-threonyl-[protein] + diphosphate. The enzyme catalyses L-tyrosyl-[protein] + ATP = O-(5'-adenylyl)-L-tyrosyl-[protein] + diphosphate. It catalyses the reaction L-histidyl-[protein] + UTP = N(tele)-(5'-uridylyl)-L-histidyl-[protein] + diphosphate. It carries out the reaction L-seryl-[protein] + UTP = O-(5'-uridylyl)-L-seryl-[protein] + diphosphate. The catalysed reaction is L-tyrosyl-[protein] + UTP = O-(5'-uridylyl)-L-tyrosyl-[protein] + diphosphate. Its function is as follows. Nucleotidyltransferase involved in the post-translational modification of proteins. It can catalyze the addition of adenosine monophosphate (AMP) or uridine monophosphate (UMP) to a protein, resulting in modifications known as AMPylation and UMPylation. This chain is Protein nucleotidyltransferase YdiU, found in Yersinia pestis (strain Pestoides F).